A 131-amino-acid polypeptide reads, in one-letter code: Ribosome-binding factor A (131 aa).

The protein belongs to the RbfA family. Monomer. Binds 30S ribosomal subunits, but not 50S ribosomal subunits or 70S ribosomes.

Its subcellular location is the cytoplasm. Functionally, one of several proteins that assist in the late maturation steps of the functional core of the 30S ribosomal subunit. Associates with free 30S ribosomal subunits (but not with 30S subunits that are part of 70S ribosomes or polysomes). Required for efficient processing of 16S rRNA. May interact with the 5'-terminal helix region of 16S rRNA. This chain is Ribosome-binding factor A, found in Mannheimia succiniciproducens (strain KCTC 0769BP / MBEL55E).